We begin with the raw amino-acid sequence, 122 residues long: Large ribosomal subunit protein uL14 (122 aa).

This sequence belongs to the universal ribosomal protein uL14 family. Part of the 50S ribosomal subunit. Forms a cluster with proteins L3 and L19. In the 70S ribosome, L14 and L19 interact and together make contacts with the 16S rRNA in bridges B5 and B8.

Binds to 23S rRNA. Forms part of two intersubunit bridges in the 70S ribosome. The chain is Large ribosomal subunit protein uL14 from Hydrogenovibrio crunogenus (strain DSM 25203 / XCL-2) (Thiomicrospira crunogena).